A 378-amino-acid chain; its full sequence is GDP-mannose 3,5-epimerase 1 (378 aa).

NAD(+) contacts are provided by residues 36-62, aspartate 60, and aspartate 80; that span reads GAGG…SDWK. Residues glycine 105 and 145–147 contribute to the substrate site; that span reads SAC. 2 residues coordinate NAD(+): tyrosine 175 and lysine 179. Tyrosine 175 (proton acceptor) is an active-site residue. Substrate is bound by residues asparagine 204, 217-219, lysine 226, 242-244, arginine 307, and serine 357; these read EKA and QTR.

This sequence belongs to the NAD(P)-dependent epimerase/dehydratase family. As to quaternary structure, homodimer. The cofactor is NAD(+).

The enzyme catalyses GDP-alpha-D-mannose = GDP-beta-L-gulose. It carries out the reaction GDP-beta-L-gulose = GDP-beta-L-galactose. The protein operates within cofactor biosynthesis; L-ascorbate biosynthesis via GDP-alpha-D-mannose pathway; L-ascorbate from GDP-alpha-D-mannose: step 1/5. Its activity is regulated as follows. Strongly activated by NAD. Activated by NADP. Slightly activated by NADH and NADPH. Inhibited by GDP. Catalyzes a reversible epimerization of GDP-D-mannose that precedes the committed step in the biosynthesis of vitamin C (L-ascorbate), resulting in the hydrolysis of the highly energetic glycosyl-pyrophosphoryl linkage. Able to catalyze 2 distinct epimerization reactions and can release both GDP-L-galactose and GDP-L-gulose from GDP-mannose. This Oryza sativa subsp. japonica (Rice) protein is GDP-mannose 3,5-epimerase 1 (GME-1).